A 90-amino-acid chain; its full sequence is Carboxysome shell vertex protein CsoS4A (90 aa).

The region spanning 1-78 is the BMV domain; the sequence is MKIYKVDKTL…SDLTIVGIID (78 aa).

It belongs to the CcmL/EutN family. CsoS4 subfamily. Homopentamer.

The protein resides in the carboxysome. In terms of biological role, probably forms vertices in the carboxysome, a polyhedral inclusion where RuBisCO (ribulose bisphosphate carboxylase, cbbL-cbbS) is sequestered. Has been modeled to induce curvature upon insertion into an otherwise flat hexagonal layer of major carboxysome subunits. The sequence is that of Carboxysome shell vertex protein CsoS4A from Hydrogenovibrio crunogenus (strain DSM 25203 / XCL-2) (Thiomicrospira crunogena).